The following is a 552-amino-acid chain: Formate--tetrahydrofolate ligase (552 aa).

65–72 (TPAGEGKT) lines the ATP pocket.

This sequence belongs to the formate--tetrahydrofolate ligase family.

It carries out the reaction (6S)-5,6,7,8-tetrahydrofolate + formate + ATP = (6R)-10-formyltetrahydrofolate + ADP + phosphate. It functions in the pathway one-carbon metabolism; tetrahydrofolate interconversion. The chain is Formate--tetrahydrofolate ligase from Fervidobacterium nodosum (strain ATCC 35602 / DSM 5306 / Rt17-B1).